The following is a 148-amino-acid chain: Protein SOB FIVE-LIKE 1 (148 aa).

A compositionally biased stretch (basic and acidic residues) spans 1 to 10 (MESPRNHGGS). Disordered regions lie at residues 1-20 (MESP…SCES) and 33-148 (NDQS…SKTK). The SOFL-A signature appears at 20 to 25 (SGWTMY). Acidic residues predominate over residues 54–76 (DGYENDDGDTSDDGGDEESDDSM). Residues 75–84 (SMASDASSGP) carry the SOFL-B motif. The span at 91-101 (HINKHAARKNG) shows a compositional bias: basic residues. Basic and acidic residues predominate over residues 111–128 (QHTEKTISNEGEKSDLKA).

Belongs to the SOFL plant protein family. In terms of tissue distribution, predominantly expressed in the vascular tissues of seedlings, developing leaves, flowers and siliques, but barely detectable in roots and stems.

Its subcellular location is the cytoplasm. It localises to the nucleus. Functionally, involved in cytokinin-mediated development. Together with SOFL2, triggers the endogenous content of specific bioactive cytokinins derived from the biosynthetic intermediates trans-zeatin riboside monophosphate (tZRMP) and N(6)-(Delta(2)-isopentenyl)adenosine monophosphate (iPRMP) such as N-glucosides trans-zeatin 7-glucoside (tZ7G), cis-zeatin 7-glucoside (cZ7G) and N(6)-(Delta(2)-isopentenyl)adenine 7-glucoside (iP7G). The polypeptide is Protein SOB FIVE-LIKE 1 (Arabidopsis thaliana (Mouse-ear cress)).